The following is a 466-amino-acid chain: F-box only protein 15 (466 aa).

The region spanning 27–73 (SASLDSLPSEVLLKILSYLDAAALLCAGCVNRRFYHLANDNFIWIRI) is the F-box domain.

In terms of assembly, directly interacts with SKP1 and CUL1.

Substrate-recognition component of the SCF (SKP1-CUL1-F-box protein)-type E3 ubiquitin ligase complex. The polypeptide is F-box only protein 15 (FBXO15) (Bos taurus (Bovine)).